The sequence spans 362 residues: MAQVFNFSSGPAMLPVDVLKQAQQELCDWQGLGTSVMEISHRGKEFIQVAEEAEKDFRDLLNIPSNYKVLFCHGGGRGQFAGIPLNLLGDKTGADYVDAGYWAASAVKEAHKYCTPNVIDAKVTVDGLRAVKPMSEWQLSDNAAYLHYCPNETIDGIAIHEEPNFGNDVVVTADLSSTILSGPLDVSRYGVIYAGAQKNIGPAGLTLVIVREDLLGKAHKACPSILDYTVLNDNDSMFNTPPTFAWYLSGLVFKWLKKNGGVAQMDKINQQKAELLYSTIDGSDFYRNDVAKANRSRMNVPFQLADSNLDKVFLEESFAAGLHALKGHRVVGGMRASIYNAMPLEGVNTLTDFMVDFERRHG.

Residues Ser-9 and Arg-42 each coordinate L-glutamate. Residues 76-77 (GR), Trp-102, Thr-153, Asp-174, and Gln-197 contribute to the pyridoxal 5'-phosphate site. At Lys-198 the chain carries N6-(pyridoxal phosphate)lysine. Pyridoxal 5'-phosphate is bound at residue 239-240 (NT).

It belongs to the class-V pyridoxal-phosphate-dependent aminotransferase family. SerC subfamily. Homodimer. Pyridoxal 5'-phosphate is required as a cofactor.

It localises to the cytoplasm. It carries out the reaction O-phospho-L-serine + 2-oxoglutarate = 3-phosphooxypyruvate + L-glutamate. The catalysed reaction is 4-(phosphooxy)-L-threonine + 2-oxoglutarate = (R)-3-hydroxy-2-oxo-4-phosphooxybutanoate + L-glutamate. It functions in the pathway amino-acid biosynthesis; L-serine biosynthesis; L-serine from 3-phospho-D-glycerate: step 2/3. The protein operates within cofactor biosynthesis; pyridoxine 5'-phosphate biosynthesis; pyridoxine 5'-phosphate from D-erythrose 4-phosphate: step 3/5. Catalyzes the reversible conversion of 3-phosphohydroxypyruvate to phosphoserine and of 3-hydroxy-2-oxo-4-phosphonooxybutanoate to phosphohydroxythreonine. This Enterobacter sp. (strain 638) protein is Phosphoserine aminotransferase.